The primary structure comprises 151 residues: Large ribosomal subunit protein uL22 (151 aa).

Polar residues predominate over residues Met-1–Ala-18. Positions Met-1–Leu-23 are disordered.

It belongs to the universal ribosomal protein uL22 family. As to quaternary structure, part of the 50S ribosomal subunit.

In terms of biological role, this protein binds specifically to 23S rRNA. It makes multiple contacts with different domains of the 23S rRNA in the assembled 50S subunit and ribosome. Its function is as follows. The globular domain of the protein is located near the polypeptide exit tunnel on the outside of the subunit, while an extended beta-hairpin is found that lines the wall of the exit tunnel in the center of the 70S ribosome. The protein is Large ribosomal subunit protein uL22 of Methanosarcina acetivorans (strain ATCC 35395 / DSM 2834 / JCM 12185 / C2A).